The chain runs to 352 residues: Putative F-box protein At5g14160 (352 aa).

The F-box domain occupies 14-60; sequence GVDWSELPEDVIRLVLRRLRLSDFHRARAVCSTWCRVWGDCVSKPNQ.

The chain is Putative F-box protein At5g14160 from Arabidopsis thaliana (Mouse-ear cress).